A 209-amino-acid polypeptide reads, in one-letter code: Uridine kinase (209 aa).

Residue 12 to 19 coordinates ATP; the sequence is GGSASGKT.

This sequence belongs to the uridine kinase family.

It is found in the cytoplasm. The enzyme catalyses uridine + ATP = UMP + ADP + H(+). It catalyses the reaction cytidine + ATP = CMP + ADP + H(+). It participates in pyrimidine metabolism; CTP biosynthesis via salvage pathway; CTP from cytidine: step 1/3. It functions in the pathway pyrimidine metabolism; UMP biosynthesis via salvage pathway; UMP from uridine: step 1/1. This is Uridine kinase from Chloroflexus aurantiacus (strain ATCC 29366 / DSM 635 / J-10-fl).